A 199-amino-acid polypeptide reads, in one-letter code: FMN-dependent NADH:quinone oxidoreductase (199 aa).

Residues 17-19 and 87-90 each bind FMN; these read SNS and MYNF.

It belongs to the azoreductase type 1 family. In terms of assembly, homodimer. The cofactor is FMN.

It catalyses the reaction 2 a quinone + NADH + H(+) = 2 a 1,4-benzosemiquinone + NAD(+). It carries out the reaction N,N-dimethyl-1,4-phenylenediamine + anthranilate + 2 NAD(+) = 2-(4-dimethylaminophenyl)diazenylbenzoate + 2 NADH + 2 H(+). Quinone reductase that provides resistance to thiol-specific stress caused by electrophilic quinones. Functionally, also exhibits azoreductase activity. Catalyzes the reductive cleavage of the azo bond in aromatic azo compounds to the corresponding amines. This Mycoplasma mycoides subsp. mycoides SC (strain CCUG 32753 / NCTC 10114 / PG1) protein is FMN-dependent NADH:quinone oxidoreductase.